Consider the following 435-residue polypeptide: Probable protein arginine N-methyltransferase 6 (435 aa).

The interval 1–48 (MQSGGDFSNGFHGDHHRELELEDKQGPSLSSFGRAKKRSHAGARDPRG) is disordered. The segment covering 12-25 (HGDHHRELELEDKQ) has biased composition (basic and acidic residues). In terms of domain architecture, SAM-dependent MTase PRMT-type spans 80-418 (DVAYFHSYAH…KENKRFMNIH (339 aa)). The S-adenosyl-L-methionine site is built by His93, Arg102, Gly126, Asp148, and Glu177. Residues Glu191 and Glu200 contribute to the active site. The interval 333 to 377 (PAKNTSETSIASGSSSISPSGEVNQKKRTNPSDALVLSTSPESPP) is disordered. Over residues 337–354 (TSETSIASGSSSISPSGE) the composition is skewed to low complexity.

The protein belongs to the class I-like SAM-binding methyltransferase superfamily. Protein arginine N-methyltransferase family. PRMT6 subfamily.

Its function is as follows. Arginine methyltransferase that can both catalyze the formation of omega-N monomethylarginine (MMA) and asymmetrical dimethylarginine (aDMA). The polypeptide is Probable protein arginine N-methyltransferase 6 (PRMT6) (Arabidopsis thaliana (Mouse-ear cress)).